We begin with the raw amino-acid sequence, 506 residues long: Procardosin-B (506 aa).

Positions 1–24 (MGTPIKASLLALFLFFLLSPTAFS) are cleaved as a signal peptide. The propeptide occupies 25 to 70 (VSNGGLLRVGLKKRKVDRLDQLRAHGVHMLGNARKDFGFRRTLSDS). A Peptidase A1 domain is found at 85–503 (YYGEIGIGTP…DYGKLRVGFA (419 aa)). The active site involves aspartate 103. Cysteine 116 and cysteine 122 are joined by a disulfide. Asparagine 139 and asparagine 252 each carry an N-linked (GlcNAc...) asparagine glycan. Cysteine 281 and cysteine 285 are oxidised to a cystine. Aspartate 290 is an active-site residue. In terms of domain architecture, Saposin B-type spans 315 to 417 (VLNQQCKTLV…NEVCDQLPTS (103 aa)). Disulfide bonds link cysteine 320–cysteine 411, cysteine 345–cysteine 383, cysteine 351–cysteine 380, and cysteine 425–cysteine 462. Asparagine 397 is a glycosylation site (N-linked (GlcNAc...) asparagine).

This sequence belongs to the peptidase A1 family. In terms of assembly, heterodimer of a light chain and a heavy chain. An intermediate form is produced first, and undergoes proteolytic processing to remove the internal plant-specific insert (PSI) and the propeptide. Detected in pistils, but not in seeds, bracts, midribs, roots, leaves or stamen extracts. Detected in seeds. In stigmas and styles, detected in the transmitting tissue and in contiguous subepidermal layers at the longitudenal grooves of the stigma (at protein level).

Its subcellular location is the microsome membrane. It is found in the protein storage vacuole. The protein resides in the secreted. The protein localises to the cell wall. It localises to the extracellular space. Its subcellular location is the extracellular matrix. Its activity is regulated as follows. Inhibited by the specific aspartic proteinase inhibitors diazoacetyl-noleucine methyl ester and pepstatin. Aspartic protease. Cleaves alpha-lactalbumin but not beta-lactoglobulin. This is Procardosin-B from Cynara cardunculus (Cardoon).